The chain runs to 177 residues: Large ribosomal subunit protein uL6 (177 aa).

Belongs to the universal ribosomal protein uL6 family. As to quaternary structure, part of the 50S ribosomal subunit.

Its function is as follows. This protein binds to the 23S rRNA, and is important in its secondary structure. It is located near the subunit interface in the base of the L7/L12 stalk, and near the tRNA binding site of the peptidyltransferase center. In Methanococcoides burtonii (strain DSM 6242 / NBRC 107633 / OCM 468 / ACE-M), this protein is Large ribosomal subunit protein uL6.